The primary structure comprises 67 residues: ATP synthase F(0) complex subunit 8 (67 aa).

The chain crosses the membrane as a helical span at residues 8–24; it reads TWFIMIFSMFLTLFILF. Lys-54 bears the N6-acetyllysine; alternate mark. Lys-54 is modified (N6-succinyllysine; alternate). Lys-57 bears the N6-acetyllysine mark.

This sequence belongs to the ATPase protein 8 family. In terms of assembly, component of the ATP synthase complex composed at least of ATP5F1A/subunit alpha, ATP5F1B/subunit beta, ATP5MC1/subunit c (homooctomer), MT-ATP6/subunit a, MT-ATP8/subunit 8, ATP5ME/subunit e, ATP5MF/subunit f, ATP5MG/subunit g, ATP5MK/subunit k, ATP5MJ/subunit j, ATP5F1C/subunit gamma, ATP5F1D/subunit delta, ATP5F1E/subunit epsilon, ATP5PF/subunit F6, ATP5PB/subunit b, ATP5PD/subunit d, ATP5PO/subunit OSCP. ATP synthase complex consists of a soluble F(1) head domain (subunits alpha(3) and beta(3)) - the catalytic core - and a membrane F(0) domain - the membrane proton channel (subunits c, a, 8, e, f, g, k and j). These two domains are linked by a central stalk (subunits gamma, delta, and epsilon) rotating inside the F1 region and a stationary peripheral stalk (subunits F6, b, d, and OSCP). Interacts with PRICKLE3.

It is found in the mitochondrion membrane. Functionally, subunit 8, of the mitochondrial membrane ATP synthase complex (F(1)F(0) ATP synthase or Complex V) that produces ATP from ADP in the presence of a proton gradient across the membrane which is generated by electron transport complexes of the respiratory chain. ATP synthase complex consist of a soluble F(1) head domain - the catalytic core - and a membrane F(1) domain - the membrane proton channel. These two domains are linked by a central stalk rotating inside the F(1) region and a stationary peripheral stalk. During catalysis, ATP synthesis in the catalytic domain of F(1) is coupled via a rotary mechanism of the central stalk subunits to proton translocation. In vivo, can only synthesize ATP although its ATP hydrolase activity can be activated artificially in vitro. Part of the complex F(0) domain. The chain is ATP synthase F(0) complex subunit 8 from Canis lupus familiaris (Dog).